Consider the following 319-residue polypeptide: G-protein coupled receptor 171 (319 aa).

Over 1 to 21 (MTNSSTFCPVYRDLEPFTYFF) the chain is Extracellular. N-linked (GlcNAc...) asparagine glycosylation is present at N3. A helical membrane pass occupies residues 22–42 (YLVFLIGIIGSCFATWAFIQK). Residues 43–48 (NTNHRC) are Cytoplasmic-facing. Residues 49–69 (VSIYLINLLTADFLLTLALPV) form a helical membrane-spanning segment. The Extracellular portion of the chain corresponds to 70–89 (KITVDLGVAPWKLRIFHCQV). The chain crosses the membrane as a helical span at residues 90–110 (TACLIYINMYLSIIFLAFVSI). Residues 111–132 (DRCLQLTYSCKIYRIQEPGFAK) are Cytoplasmic-facing. A helical membrane pass occupies residues 133 to 153 (MISAVVWLMVLLIMVPNMIIP). Residues 154-181 (IKDIKEKPNVGCMEFKSEFGRNWHLLTN) are Extracellular-facing. Residues 182–202 (FISIAIFFNFSAIILISNCLV) traverse the membrane as a helical segment. Topologically, residues 203-224 (IRQLYRNKDNENYPNVKRALIS) are cytoplasmic. Residues 225 to 245 (ILLVTTGYIICFVPYHIVRIP) traverse the membrane as a helical segment. Over 246-268 (YTLSQTEVISDCSTRISLFKAKE) the chain is Extracellular. A helical membrane pass occupies residues 269–289 (ATLLLAVSNLCFDPILYYHLS). At 290-319 (KAFRLKITETFASHKESKAQKEKPRSENNA) the chain is on the cytoplasmic side.

This sequence belongs to the G-protein coupled receptor 1 family.

It localises to the cell membrane. Functionally, G-protein coupled receptor for Big LEN, a 16-amino acid neuropeptide produced from the precursor protein, proSAAS (encoded by PCSK1N). Acts through a G(i)-alpha-mediated pathway in response to bigLEN. Big LEN-GPR171 system plays an important role in regulating feeding and metabolism. Also plays a role in modulating fear and anxiety-like behaviors in the basolateral amygdala. Big LEN-GPR171 modulates the mu-type opioid receptor signaling and antinociception. Acts as a negative regulator T cell function. The polypeptide is G-protein coupled receptor 171 (GPR171) (Bos taurus (Bovine)).